The sequence spans 248 residues: PF03932 family protein CutC (248 aa).

Belongs to the CutC family. As to quaternary structure, homodimer.

It is found in the cytoplasm. In Shigella boydii serotype 18 (strain CDC 3083-94 / BS512), this protein is PF03932 family protein CutC.